The following is a 95-amino-acid chain: Integration host factor subunit beta (95 aa).

This sequence belongs to the bacterial histone-like protein family. As to quaternary structure, heterodimer of an alpha and a beta chain.

Its function is as follows. This protein is one of the two subunits of integration host factor, a specific DNA-binding protein that functions in genetic recombination as well as in transcriptional and translational control. The polypeptide is Integration host factor subunit beta (Ruegeria sp. (strain TM1040) (Silicibacter sp.)).